We begin with the raw amino-acid sequence, 364 residues long: DNA polymerase IV (364 aa).

A UmuC domain is found at 14-198 (IIHIDMDAFF…LPVEKFHGVG (185 aa)). Residues aspartate 18 and aspartate 116 each coordinate Mg(2+). Glutamate 117 is a catalytic residue.

The protein belongs to the DNA polymerase type-Y family. As to quaternary structure, monomer. Requires Mg(2+) as cofactor.

It is found in the cytoplasm. The catalysed reaction is DNA(n) + a 2'-deoxyribonucleoside 5'-triphosphate = DNA(n+1) + diphosphate. Poorly processive, error-prone DNA polymerase involved in untargeted mutagenesis. Copies undamaged DNA at stalled replication forks, which arise in vivo from mismatched or misaligned primer ends. These misaligned primers can be extended by PolIV. Exhibits no 3'-5' exonuclease (proofreading) activity. May be involved in translesional synthesis, in conjunction with the beta clamp from PolIII. This is DNA polymerase IV from Lactococcus lactis subsp. cremoris (strain MG1363).